Consider the following 105-residue polypeptide: Large ribosomal subunit protein eL36 (105 aa).

This sequence belongs to the eukaryotic ribosomal protein eL36 family. In terms of assembly, component of the large ribosomal subunit.

The protein resides in the cytoplasm. Its subcellular location is the cytosol. In terms of biological role, component of the large ribosomal subunit. The ribosome is a large ribonucleoprotein complex responsible for the synthesis of proteins in the cell. In Danio rerio (Zebrafish), this protein is Large ribosomal subunit protein eL36 (rpl36).